We begin with the raw amino-acid sequence, 150 residues long: UPF0178 protein Shewana3_1627 (150 aa).

Belongs to the UPF0178 family.

The polypeptide is UPF0178 protein Shewana3_1627 (Shewanella sp. (strain ANA-3)).